We begin with the raw amino-acid sequence, 504 residues long: Activin receptor type-1 (504 aa).

Positions 1-16 (MALPVLLLLLALPSRS) are cleaved as a signal peptide. Topologically, residues 17-119 (VQDEELKLNE…EAAGYSMETL (103 aa)) are extracellular. An N-linked (GlcNAc...) asparagine glycan is attached at asparagine 94. Residues 120 to 140 (IIVILAPVVVLVIFSVVAVLI) traverse the membrane as a helical segment. Residues 141–504 (IRRIQKNHME…NSLDKLKADC (364 aa)) lie on the Cytoplasmic side of the membrane. The GS domain occupies 173–202 (STLADLLDHSCTSGSGSGLPFLVQRTVARQ). The Protein kinase domain occupies 203 to 497 (ITLVECVGKG…KTLTKIDNSL (295 aa)). ATP contacts are provided by residues 209–217 (VGKGRYGEV) and lysine 230. Aspartate 331 (proton acceptor) is an active-site residue.

This sequence belongs to the protein kinase superfamily. TKL Ser/Thr protein kinase family. TGFB receptor subfamily. The cofactor is Mg(2+). Mn(2+) serves as cofactor.

Its subcellular location is the membrane. It carries out the reaction L-threonyl-[receptor-protein] + ATP = O-phospho-L-threonyl-[receptor-protein] + ADP + H(+). The enzyme catalyses L-seryl-[receptor-protein] + ATP = O-phospho-L-seryl-[receptor-protein] + ADP + H(+). Functionally, on ligand binding, forms a receptor complex consisting of two type II and two type I transmembrane serine/threonine kinases. Type II receptors phosphorylate and activate type I receptors which autophosphorylate, then bind and activate SMAD transcriptional regulators. Receptor for activin. This is Activin receptor type-1 (ACVR1) from Gallus gallus (Chicken).